A 320-amino-acid chain; its full sequence is tRNA pseudouridine synthase B (320 aa).

Aspartate 48 functions as the Nucleophile in the catalytic mechanism.

This sequence belongs to the pseudouridine synthase TruB family. Type 1 subfamily.

It carries out the reaction uridine(55) in tRNA = pseudouridine(55) in tRNA. In terms of biological role, responsible for synthesis of pseudouridine from uracil-55 in the psi GC loop of transfer RNAs. The chain is tRNA pseudouridine synthase B from Mycobacterium leprae (strain TN).